Consider the following 85-residue polypeptide: UPF0386 protein RHECIAT_CH0001945 (85 aa).

This sequence belongs to the UPF0386 family.

In Rhizobium etli (strain CIAT 652), this protein is UPF0386 protein RHECIAT_CH0001945.